A 276-amino-acid chain; its full sequence is Digeranylgeranylglyceryl phosphate synthase (276 aa).

The next 5 helical transmembrane spans lie at 14–34 (VNTL…GGAV), 90–110 (VVLF…AVCI), 144–164 (FVFG…AALA), 200–220 (ALAV…VPYL), and 221–241 (VGVF…VMVV).

This sequence belongs to the UbiA prenyltransferase family. DGGGP synthase subfamily. Mg(2+) is required as a cofactor.

Its subcellular location is the cell membrane. It catalyses the reaction sn-3-O-(geranylgeranyl)glycerol 1-phosphate + (2E,6E,10E)-geranylgeranyl diphosphate = 2,3-bis-O-(geranylgeranyl)-sn-glycerol 1-phosphate + diphosphate. It functions in the pathway membrane lipid metabolism; glycerophospholipid metabolism. In terms of biological role, prenyltransferase that catalyzes the transfer of the geranylgeranyl moiety of geranylgeranyl diphosphate (GGPP) to the C2 hydroxyl of (S)-3-O-geranylgeranylglyceryl phosphate (GGGP). This reaction is the second ether-bond-formation step in the biosynthesis of archaeal membrane lipids. The sequence is that of Digeranylgeranylglyceryl phosphate synthase from Halobacterium salinarum (strain ATCC 29341 / DSM 671 / R1).